The chain runs to 63 residues: Alpha-conotoxin-like PuSG1.1 (63 aa).

A signal peptide spans 1–21 (MRCLAFLVVTLLLFTATATTG). Residues 22–43 (ASNGMNAAASGEAPDSISLAVR) constitute a propeptide that is removed on maturation. 2 disulfides stabilise this stretch: Cys46/Cys52 and Cys47/Cys60. Residues 48–50 (PDP) are lacks the Ser-Xaa-Pro motif that is crucial for potent interaction with nAChR.

Belongs to the conotoxin A superfamily. As to expression, expressed by the salivary gland.

The protein localises to the secreted. Alpha-conopeptides-like may act on postsynaptic membranes, they bind to the nicotinic acetylcholine receptors (nAChR) and thus inhibit them. Has possibly a distinct nAChR binding mode from other alpha-conotoxins, due to a different three residue motif (lacks the Ser-Xaa-Pro motif). This Conus pulicarius (Flea-bitten cone) protein is Alpha-conotoxin-like PuSG1.1.